The primary structure comprises 365 residues: Aminomethyltransferase (365 aa).

The protein belongs to the GcvT family. As to quaternary structure, the glycine cleavage system is composed of four proteins: P, T, L and H.

It carries out the reaction N(6)-[(R)-S(8)-aminomethyldihydrolipoyl]-L-lysyl-[protein] + (6S)-5,6,7,8-tetrahydrofolate = N(6)-[(R)-dihydrolipoyl]-L-lysyl-[protein] + (6R)-5,10-methylene-5,6,7,8-tetrahydrofolate + NH4(+). The glycine cleavage system catalyzes the degradation of glycine. The polypeptide is Aminomethyltransferase (Yersinia pseudotuberculosis serotype O:3 (strain YPIII)).